Consider the following 185-residue polypeptide: Large ribosomal subunit protein uL5 (185 aa).

The protein belongs to the universal ribosomal protein uL5 family. As to quaternary structure, part of the 50S ribosomal subunit; part of the 5S rRNA/L5/L18/L25 subcomplex. Contacts the 5S rRNA and the P site tRNA. Forms a bridge to the 30S subunit in the 70S ribosome.

Its function is as follows. This is one of the proteins that bind and probably mediate the attachment of the 5S RNA into the large ribosomal subunit, where it forms part of the central protuberance. In the 70S ribosome it contacts protein S13 of the 30S subunit (bridge B1b), connecting the 2 subunits; this bridge is implicated in subunit movement. Contacts the P site tRNA; the 5S rRNA and some of its associated proteins might help stabilize positioning of ribosome-bound tRNAs. The protein is Large ribosomal subunit protein uL5 of Protochlamydia amoebophila (strain UWE25).